The sequence spans 309 residues: Methionyl-tRNA formyltransferase (309 aa).

112 to 115 (SLLP) lines the (6S)-5,6,7,8-tetrahydrofolate pocket.

Belongs to the Fmt family.

It carries out the reaction L-methionyl-tRNA(fMet) + (6R)-10-formyltetrahydrofolate = N-formyl-L-methionyl-tRNA(fMet) + (6S)-5,6,7,8-tetrahydrofolate + H(+). Its function is as follows. Attaches a formyl group to the free amino group of methionyl-tRNA(fMet). The formyl group appears to play a dual role in the initiator identity of N-formylmethionyl-tRNA by promoting its recognition by IF2 and preventing the misappropriation of this tRNA by the elongation apparatus. This Bartonella bacilliformis (strain ATCC 35685 / KC583 / Herrer 020/F12,63) protein is Methionyl-tRNA formyltransferase.